Consider the following 25-residue polypeptide: Small ribosomal subunit protein eS32 eS32z/eS32y/eS32x/eS32w/eS32v (25 aa).

The interval 1-25 is disordered; it reads MRAKWKKKRMRRLKRKRRKMRQRSK.

This sequence belongs to the eukaryotic ribosomal protein eS32 family. In terms of assembly, component of the small ribosomal subunit (SSU).

This chain is Small ribosomal subunit protein eS32 eS32z/eS32y/eS32x/eS32w/eS32v (RPL41A), found in Arabidopsis thaliana (Mouse-ear cress).